The sequence spans 195 residues: Imidazoleglycerol-phosphate dehydratase (195 aa).

It belongs to the imidazoleglycerol-phosphate dehydratase family.

The protein resides in the cytoplasm. The enzyme catalyses D-erythro-1-(imidazol-4-yl)glycerol 3-phosphate = 3-(imidazol-4-yl)-2-oxopropyl phosphate + H2O. It participates in amino-acid biosynthesis; L-histidine biosynthesis; L-histidine from 5-phospho-alpha-D-ribose 1-diphosphate: step 6/9. This Geobacillus kaustophilus (strain HTA426) protein is Imidazoleglycerol-phosphate dehydratase.